The sequence spans 382 residues: Heme A synthase (382 aa).

7 consecutive transmembrane segments (helical) span residues 37–57 (IRVW…VGGL), 126–146 (VIGV…QVPA), 152–172 (LLFL…MVAS), 188–208 (LATH…YIME), 231–251 (STGL…VAGI), 288–308 (LVQF…VVVW), and 332–352 (LQIV…IAIF). Histidine 293 is a binding site for heme. Residue histidine 353 participates in heme binding. The chain crosses the membrane as a helical span at residues 356 to 376 (LAVIVWVLILRARFLSGYPIA).

It belongs to the COX15/CtaA family. Type 2 subfamily. Interacts with CtaB. The cofactor is heme b.

It localises to the cell membrane. It catalyses the reaction Fe(II)-heme o + 2 A + H2O = Fe(II)-heme a + 2 AH2. It participates in porphyrin-containing compound metabolism; heme A biosynthesis; heme A from heme O: step 1/1. Its function is as follows. Catalyzes the conversion of heme O to heme A by two successive hydroxylations of the methyl group at C8. The first hydroxylation forms heme I, the second hydroxylation results in an unstable dihydroxymethyl group, which spontaneously dehydrates, resulting in the formyl group of heme A. The polypeptide is Heme A synthase (Roseobacter denitrificans (strain ATCC 33942 / OCh 114) (Erythrobacter sp. (strain OCh 114))).